Consider the following 400-residue polypeptide: Elongation factor Tu (400 aa).

The tr-type G domain maps to 10-210; sequence KPHCNVGTIG…VDSYIPIPPR (201 aa). A G1 region spans residues 19-26; that stretch reads GHVDHGKT. A GTP-binding site is contributed by 19-26; the sequence is GHVDHGKT. A Mg(2+)-binding site is contributed by threonine 26. The interval 60–64 is G2; the sequence is GLTIA. The interval 81 to 84 is G3; sequence DCPG. GTP-binding positions include 81-85 and 136-139; these read DCPGH and NKCD. The segment at 136–139 is G4; sequence NKCD. The segment at 174 to 176 is G5; it reads SAI.

It belongs to the TRAFAC class translation factor GTPase superfamily. Classic translation factor GTPase family. EF-Tu/EF-1A subfamily. Monomer.

The protein localises to the cytoplasm. It carries out the reaction GTP + H2O = GDP + phosphate + H(+). In terms of biological role, GTP hydrolase that promotes the GTP-dependent binding of aminoacyl-tRNA to the A-site of ribosomes during protein biosynthesis. This Dehalococcoides mccartyi (strain ATCC BAA-2266 / KCTC 15142 / 195) (Dehalococcoides ethenogenes (strain 195)) protein is Elongation factor Tu.